Reading from the N-terminus, the 191-residue chain is uncharacterized protein (191 aa).

A run of 6 helical transmembrane segments spans residues 4 to 24, 26 to 46, 68 to 88, 90 to 110, 135 to 155, and 168 to 188; these read IYRQTIHLVFGVLIAFSVLIF, KQLIIPLIVSIVIGICLYFLC, GKGAIYFAIGMLISLILIDDI, AVFFGILVFAVGDSLATIIGI, LILYPFYGTYGIFVALISAFI, and LYLPFIVAFIINHQINICSLM.

The protein resides in the cell membrane. This is an uncharacterized protein from Methanocaldococcus jannaschii (strain ATCC 43067 / DSM 2661 / JAL-1 / JCM 10045 / NBRC 100440) (Methanococcus jannaschii).